Here is a 489-residue protein sequence, read N- to C-terminus: MSTHFIDGSWVTGAGEPFASRNPVTQAVVFEGRAASEEQVDAAVAAARGAFAAWRDRGLEERAALVKRFAGVLGEHKARLADVIGLETGKPRWEALTEVQTMIGKIDVSLMAWRERTGERQAEAGDATAVVRHRPHGVVAVLGPYNFPGHLPNGHIVPALIAGNCVVFKPSELTPRVAEETARLWEKAGIPAGVLNLVQGGRRTGVALAGHPGIDGLFFTGSSGTGNALHRQLAGQPEKILALEMGGNNPLIVQDVANTEAAIHHILQSSFISAGQRCTCARRLLVPATPEGDALLGRLVDAASRLKVGRYDDAEQPFMGAVISLAAADRLLAAQARLVSLGGEVLLEMRRLEEGTALLSPGILDVSAIKELPDEEHFGPLVQVQRYGSFDEALSLANRTRYGLAAGLISDRRELYERFWRESRAGIVNWNKPLTGASSAAPFGGVGSSGNHRPSAYYAADYCAYPVAGLEAAAVALPGQLAPGMRLNS.

NAD(+) is bound at residue 221–226 (GSSGTG). Active-site residues include Glu244 and Cys278.

It belongs to the aldehyde dehydrogenase family. AstD subfamily.

The catalysed reaction is N-succinyl-L-glutamate 5-semialdehyde + NAD(+) + H2O = N-succinyl-L-glutamate + NADH + 2 H(+). It functions in the pathway amino-acid degradation; L-arginine degradation via AST pathway; L-glutamate and succinate from L-arginine: step 4/5. In terms of biological role, catalyzes the NAD-dependent reduction of succinylglutamate semialdehyde into succinylglutamate. The polypeptide is N-succinylglutamate 5-semialdehyde dehydrogenase (Sorangium cellulosum (strain So ce56) (Polyangium cellulosum (strain So ce56))).